Consider the following 431-residue polypeptide: Gamma-glutamyl phosphate reductase (431 aa).

Belongs to the gamma-glutamyl phosphate reductase family.

It is found in the cytoplasm. It catalyses the reaction L-glutamate 5-semialdehyde + phosphate + NADP(+) = L-glutamyl 5-phosphate + NADPH + H(+). It functions in the pathway amino-acid biosynthesis; L-proline biosynthesis; L-glutamate 5-semialdehyde from L-glutamate: step 2/2. In terms of biological role, catalyzes the NADPH-dependent reduction of L-glutamate 5-phosphate into L-glutamate 5-semialdehyde and phosphate. The product spontaneously undergoes cyclization to form 1-pyrroline-5-carboxylate. This Methylobacterium sp. (strain 4-46) protein is Gamma-glutamyl phosphate reductase.